A 632-amino-acid polypeptide reads, in one-letter code: tRNA uridine 5-carboxymethylaminomethyl modification enzyme MnmG (632 aa).

FAD contacts are provided by residues 15–20 (GAGHAG), Ile127, and Ser182. 276 to 290 (GPRYCPSIEDKIVRF) contributes to the NAD(+) binding site. Gln373 contributes to the FAD binding site.

Belongs to the MnmG family. As to quaternary structure, homodimer. Heterotetramer of two MnmE and two MnmG subunits. It depends on FAD as a cofactor.

Its subcellular location is the cytoplasm. In terms of biological role, NAD-binding protein involved in the addition of a carboxymethylaminomethyl (cmnm) group at the wobble position (U34) of certain tRNAs, forming tRNA-cmnm(5)s(2)U34. The polypeptide is tRNA uridine 5-carboxymethylaminomethyl modification enzyme MnmG (Streptococcus pyogenes serotype M2 (strain MGAS10270)).